We begin with the raw amino-acid sequence, 253 residues long: Probable U2 small nuclear ribonucleoprotein A' (253 aa).

LRR repeat units follow at residues 20-41 (NMRE…GVTR), 43-64 (QFDV…PTFS), 65-86 (RLNT…IATK), and 89-110 (NLKT…EPLA). The LRRCT domain maps to 123–161 (NPITHKDNYRMYMIYKLPTVRVIDFNRVRLTEREAAKKM). Disordered regions lie at residues 163–205 (KGKS…EDRE) and 232–253 (VPEK…AMES). A compositionally biased stretch (basic and acidic residues) spans 169-182 (KARDAIQKSVHTED).

It belongs to the U2 small nuclear ribonucleoprotein A family. Interacts with rnp-3.

It is found in the nucleus. Functionally, this protein is associated with sn-RNP U2. It helps the A' protein to bind stem loop IV of U2 snRNA. Required maternally for early embryonic development and zygotically for germline and somatic development. Has a role in the switch from mitosis to meiosis. Might function in alternative splicing. The protein is Probable U2 small nuclear ribonucleoprotein A' (mog-2) of Caenorhabditis elegans.